The chain runs to 78 residues: DNA-directed RNA polymerase subunit omega (78 aa).

This sequence belongs to the RNA polymerase subunit omega family. As to quaternary structure, in cyanobacteria the RNAP catalytic core is composed of 2 alpha, 1 beta, 1 beta', 1 gamma and 1 omega subunit. When a sigma factor is associated with the core the holoenzyme is formed, which can initiate transcription.

The enzyme catalyses RNA(n) + a ribonucleoside 5'-triphosphate = RNA(n+1) + diphosphate. Its function is as follows. Promotes RNA polymerase assembly. Latches the N- and C-terminal regions of the beta' subunit thereby facilitating its interaction with the beta and alpha subunits. In Prochlorococcus marinus (strain MIT 9312), this protein is DNA-directed RNA polymerase subunit omega.